Here is a 129-residue protein sequence, read N- to C-terminus: Small ribosomal subunit protein uS11 (129 aa).

It belongs to the universal ribosomal protein uS11 family. In terms of assembly, part of the 30S ribosomal subunit. Interacts with proteins S7 and S18. Binds to IF-3.

Its function is as follows. Located on the platform of the 30S subunit, it bridges several disparate RNA helices of the 16S rRNA. Forms part of the Shine-Dalgarno cleft in the 70S ribosome. The chain is Small ribosomal subunit protein uS11 from Mannheimia succiniciproducens (strain KCTC 0769BP / MBEL55E).